The following is a 338-amino-acid chain: Formimidoylglutamase (338 aa).

Mn(2+) contacts are provided by histidine 137, aspartate 166, histidine 168, aspartate 170, cysteine 259, and aspartate 261.

This sequence belongs to the arginase family. The cofactor is Mn(2+).

It catalyses the reaction N-formimidoyl-L-glutamate + H2O = formamide + L-glutamate. It functions in the pathway amino-acid degradation; L-histidine degradation into L-glutamate; L-glutamate from N-formimidoyl-L-glutamate (hydrolase route): step 1/1. Its function is as follows. Catalyzes the conversion of N-formimidoyl-L-glutamate to L-glutamate and formamide. The polypeptide is Formimidoylglutamase (Clostridium tetani (strain Massachusetts / E88)).